The sequence spans 878 residues: Valine--tRNA ligase (878 aa).

Residues 45-55 (PNVTGQLHMGH) carry the 'HIGH' region motif. The 'KMSKS' region motif lies at 524-528 (KMSKS). Lys527 lines the ATP pocket. Positions 804–871 (PLKDLIDLEK…REKEVLEQRI (68 aa)) form a coiled coil.

Belongs to the class-I aminoacyl-tRNA synthetase family. ValS type 1 subfamily. Monomer.

The protein resides in the cytoplasm. The catalysed reaction is tRNA(Val) + L-valine + ATP = L-valyl-tRNA(Val) + AMP + diphosphate. Functionally, catalyzes the attachment of valine to tRNA(Val). As ValRS can inadvertently accommodate and process structurally similar amino acids such as threonine, to avoid such errors, it has a 'posttransfer' editing activity that hydrolyzes mischarged Thr-tRNA(Val) in a tRNA-dependent manner. The polypeptide is Valine--tRNA ligase (Carboxydothermus hydrogenoformans (strain ATCC BAA-161 / DSM 6008 / Z-2901)).